Consider the following 195-residue polypeptide: Large ribosomal subunit protein bL17 (195 aa).

The tract at residues 132–195 (ARGTRFAARK…TEAKDTKPES (64 aa)) is disordered. Residues 159–186 (PTAAAVAAEAQAEQPTAEAVAADDAATT) show a composition bias toward low complexity.

It belongs to the bacterial ribosomal protein bL17 family. In terms of assembly, part of the 50S ribosomal subunit. Contacts protein L32.

This Parafrankia sp. (strain EAN1pec) protein is Large ribosomal subunit protein bL17.